The following is a 1458-amino-acid chain: Secretory phospholipase A2 receptor (1458 aa).

Residues 1 to 23 (MLLSLLLLLLLGAPRRCTEGAAA) form the signal peptide. At 24-1393 (ALSPERVLKW…EHPGKGPSHS (1370 aa)) the chain is on the extracellular side. 17 disulfides stabilise this stretch: Cys-49–Cys-62, Cys-87–Cys-104, Cys-176–Cys-202, Cys-190–Cys-217, Cys-258–Cys-352, Cys-328–Cys-344, Cys-404–Cys-499, Cys-476–Cys-491, Cys-615–Cys-632, Cys-697–Cys-794, Cys-772–Cys-786, Cys-838–Cys-935, Cys-912–Cys-927, Cys-1065–Cys-1085, Cys-1207–Cys-1221, Cys-1278–Cys-1373, and Cys-1350–Cys-1365. The Ricin B-type lectin domain maps to 49–113 (CIQAGKSVLT…CDSTHVSLRW (65 aa)). N-linked (GlcNAc...) asparagine glycosylation occurs at Asn-91. Positions 171–219 (AHGTPCMFPFQYNHQWHHECTREGRQDDSLWCATTSRYERDEKWGFCPD) constitute a Fibronectin type-II domain. C-type lectin domains lie at 227–356 (CDAV…KKYL), 374–502 (TDCE…CKKP), 511–645 (SGCQ…KQPV), 660–798 (HPCY…KIPR), 815–939 (LFHQ…KRKT), 954–1098 (GTCP…EKIQ), 1117–1231 (LEYG…AICH), and 1243–1376 (ELCS…CKMK). Residues Asn-408, Asn-431, and Asn-452 are each glycosylated (N-linked (GlcNAc...) asparagine). A helical transmembrane segment spans residues 1394–1416 (IVPLAVALTLVVILAIITLSFYI). At 1417–1458 (YKQNKGFFRRLAGVGNSYYPTTNFSTIHLEENILISDLEKND) the chain is on the cytoplasmic side. The Endocytosis signal motif lies at 1432-1438 (NSYYPTT).

As to quaternary structure, interacts with sPLA2-IB/PLA2G1B; this interaction mediates intracellular signaling as well as clearance of extracellular sPLA2-IB/PLA2G1B via endocytotic pathway. Interacts with sPLA2-X/PLA2G10; this interaction mediates sPLA2-X/PLA2G10 clearance and inactivation. In terms of processing, the secretory phospholipase A2 receptor form may be produced by the action of metalloproteinases. It contains all extracellular domains and only lacks transmembrane and cytosolic regions. It is however unclear whether this form is produced by proteolytic cleavage as suggested by some experiments, or by alternative splicing. As to expression, lung, skeletal muscle, brain, kidney and heart.

It localises to the cell membrane. The protein resides in the secreted. Receptor for secretory phospholipase A2 (sPLA2). Also able to bind to snake PA2-like toxins. Although its precise function remains unclear, binding of sPLA2 to its receptor participates in both positive and negative regulation of sPLA2 functions as well as clearance of sPLA2. Binding of sPLA2-IB/PLA2G1B induces various effects depending on the cell type, such as activation of the mitogen-activated protein kinase (MAPK) cascade to induce cell proliferation, the production of lipid mediators, selective release of arachidonic acid in bone marrow-derived mast cells. In neutrophils, binding of sPLA2-IB/PLA2G1B can activate p38 MAPK to stimulate elastase release and cell adhesion. May be involved in responses in pro-inflammatory cytokine productions during endotoxic shock. Also has endocytic properties and rapidly internalizes sPLA2 ligands, which is particularly important for the clearance of extracellular sPLA2s to protect their potent enzymatic activities. The soluble secretory phospholipase A2 receptor form is circulating and acts as a negative regulator of sPLA2 functions by blocking the biological functions of sPLA2-IB/PLA2G1B and sPLA2-X/PLA2G10. This is Secretory phospholipase A2 receptor (PLA2R1) from Oryctolagus cuniculus (Rabbit).